Reading from the N-terminus, the 329-residue chain is NADH-quinone oxidoreductase subunit H (329 aa).

9 consecutive transmembrane segments (helical) span residues 9–29 (LIKILILVAVFSALGGFATYI), 42–62 (GPCYVGPFGLLQVAADGIKLF), 75–95 (FIFTLAPIIAMVSAFVSMAPI), 117–137 (IGFLFFLAVGAAGIYAPILAG), 154–174 (IQLLSFEVVSTLTILAPLMVV), 188–208 (GGFLDWLVFKQPLAFVLFLIA), 238–258 (LKWGMFFLAEYAHLFAFSFVI), 269–291 (WGFIPGGIAILIKAGFFVFLSMW), and 309–329 (WKIMLPLALLNIVLTGIIILI).

It belongs to the complex I subunit 1 family. As to quaternary structure, NDH-1 is composed of 14 different subunits. Subunits NuoA, H, J, K, L, M, N constitute the membrane sector of the complex.

It localises to the cell inner membrane. The catalysed reaction is a quinone + NADH + 5 H(+)(in) = a quinol + NAD(+) + 4 H(+)(out). NDH-1 shuttles electrons from NADH, via FMN and iron-sulfur (Fe-S) centers, to quinones in the respiratory chain. The immediate electron acceptor for the enzyme in this species is believed to be ubiquinone. Couples the redox reaction to proton translocation (for every two electrons transferred, four hydrogen ions are translocated across the cytoplasmic membrane), and thus conserves the redox energy in a proton gradient. This subunit may bind ubiquinone. The polypeptide is NADH-quinone oxidoreductase subunit H (Helicobacter pylori (strain Shi470)).